The following is a 174-amino-acid chain: Myeloid-derived growth factor (174 aa).

A signal peptide spans 1–32; sequence MAAPSGRRNGSGGANLWVSLLLAAAALRPVET.

This sequence belongs to the MYDGF family.

It localises to the secreted. Its subcellular location is the endoplasmic reticulum-Golgi intermediate compartment. It is found in the endoplasmic reticulum. The protein resides in the golgi apparatus. Bone marrow-derived monocyte and paracrine-acting protein that promotes cardiac myocyte survival and adaptive angiogenesis for cardiac protection and/or repair after myocardial infarction (MI). Stimulates endothelial cell proliferation through a MAPK1/3-, STAT3- and CCND1-mediated signaling pathway. Inhibits cardiac myocyte apoptosis in a PI3K/AKT-dependent signaling pathway. This Bos taurus (Bovine) protein is Myeloid-derived growth factor.